The primary structure comprises 393 residues: Acetylornithine aminotransferase (393 aa).

Pyridoxal 5'-phosphate-binding positions include 105–106 (GA) and Phe138. Arg141 lines the N(2)-acetyl-L-ornithine pocket. A pyridoxal 5'-phosphate-binding site is contributed by 224 to 227 (DEVQ). N6-(pyridoxal phosphate)lysine is present on Lys253. Ser281 contributes to the N(2)-acetyl-L-ornithine binding site. Position 282 (Thr282) interacts with pyridoxal 5'-phosphate.

This sequence belongs to the class-III pyridoxal-phosphate-dependent aminotransferase family. ArgD subfamily. Homodimer. Requires pyridoxal 5'-phosphate as cofactor.

It localises to the cytoplasm. The enzyme catalyses N(2)-acetyl-L-ornithine + 2-oxoglutarate = N-acetyl-L-glutamate 5-semialdehyde + L-glutamate. The protein operates within amino-acid biosynthesis; L-arginine biosynthesis; N(2)-acetyl-L-ornithine from L-glutamate: step 4/4. This Haemophilus ducreyi (strain 35000HP / ATCC 700724) protein is Acetylornithine aminotransferase.